The chain runs to 264 residues: 4-hydroxy-tetrahydrodipicolinate reductase (264 aa).

Residue 9–14 (GCSGRM) coordinates NAD(+). An NADP(+)-binding site is contributed by Arg36. NAD(+) is bound by residues 100-102 (GTT) and 121-124 (SANM). The active-site Proton donor/acceptor is the His154. Residue His155 coordinates (S)-2,3,4,5-tetrahydrodipicolinate. Catalysis depends on Lys158, which acts as the Proton donor. (S)-2,3,4,5-tetrahydrodipicolinate is bound at residue 164–165 (GT).

The protein belongs to the DapB family.

The protein localises to the cytoplasm. It catalyses the reaction (S)-2,3,4,5-tetrahydrodipicolinate + NAD(+) + H2O = (2S,4S)-4-hydroxy-2,3,4,5-tetrahydrodipicolinate + NADH + H(+). The catalysed reaction is (S)-2,3,4,5-tetrahydrodipicolinate + NADP(+) + H2O = (2S,4S)-4-hydroxy-2,3,4,5-tetrahydrodipicolinate + NADPH + H(+). Its pathway is amino-acid biosynthesis; L-lysine biosynthesis via DAP pathway; (S)-tetrahydrodipicolinate from L-aspartate: step 4/4. Catalyzes the conversion of 4-hydroxy-tetrahydrodipicolinate (HTPA) to tetrahydrodipicolinate. In Wolbachia sp. subsp. Brugia malayi (strain TRS), this protein is 4-hydroxy-tetrahydrodipicolinate reductase.